Here is a 316-residue protein sequence, read N- to C-terminus: NADH-quinone oxidoreductase subunit H (316 aa).

8 helical membrane passes run 6-26 (PAVV…LIWV), 74-94 (FVIA…VVPF), 98-118 (VGVI…SLAV), 145-165 (ISYE…AGSF), 177-197 (GWYV…AVAE), 233-253 (YLGI…GWLG), 256-276 (FLPP…FFIL), and 296-316 (VMLP…LSVP).

This sequence belongs to the complex I subunit 1 family. As to quaternary structure, NDH-1 is composed of 14 different subunits. Subunits NuoA, H, J, K, L, M, N constitute the membrane sector of the complex.

The protein localises to the cell inner membrane. It catalyses the reaction a quinone + NADH + 5 H(+)(in) = a quinol + NAD(+) + 4 H(+)(out). Functionally, NDH-1 shuttles electrons from NADH, via FMN and iron-sulfur (Fe-S) centers, to quinones in the respiratory chain. The immediate electron acceptor for the enzyme in this species is believed to be ubiquinone. Couples the redox reaction to proton translocation (for every two electrons transferred, four hydrogen ions are translocated across the cytoplasmic membrane), and thus conserves the redox energy in a proton gradient. This subunit may bind ubiquinone. The sequence is that of NADH-quinone oxidoreductase subunit H from Methylococcus capsulatus (strain ATCC 33009 / NCIMB 11132 / Bath).